We begin with the raw amino-acid sequence, 470 residues long: GTPase Der (470 aa).

EngA-type G domains lie at 2–165 and 201–372; these read KTIA…GLEA and IRVG…ENFS. GTP-binding positions include 8-15, 55-59, 117-120, 207-214, 254-258, and 318-321; these read GKPNVGKS, DTGGI, NKID, GKVNVGKS, DTAGI, and NKWD. Positions 373-457 constitute a KH-like domain; sequence RRIPTSILNK…PILIRARKRG (85 aa).

It belongs to the TRAFAC class TrmE-Era-EngA-EngB-Septin-like GTPase superfamily. EngA (Der) GTPase family. Associates with the 50S ribosomal subunit.

Functionally, GTPase that plays an essential role in the late steps of ribosome biogenesis. The chain is GTPase Der from Wolinella succinogenes (strain ATCC 29543 / DSM 1740 / CCUG 13145 / JCM 31913 / LMG 7466 / NCTC 11488 / FDC 602W) (Vibrio succinogenes).